Reading from the N-terminus, the 335-residue chain is DNA polymerase beta (335 aa).

Residue K41 forms a Glycyl lysine isopeptide (Lys-Gly) (interchain with G-Cter in ubiquitin) linkage. Residue K60 coordinates K(+). K60 lines the Na(+) pocket. K61 is covalently cross-linked (Glycyl lysine isopeptide (Lys-Gly) (interchain with G-Cter in ubiquitin)). K(+)-binding residues include L62 and V65. Na(+)-binding residues include L62 and V65. The Nucleophile; Schiff-base intermediate with DNA; for 5'-dRP lyase activity role is filled by K72. K72 bears the N6-acetyllysine mark. K81 participates in a covalent cross-link: Glycyl lysine isopeptide (Lys-Gly) (interchain with G-Cter in ubiquitin). R83 is modified (omega-N-methylarginine; by PRMT6). The K(+) site is built by T101, V103, and I106. Positions 101, 103, and 106 each coordinate Na(+). R149 provides a ligand contact to a 2'-deoxyribonucleoside 5'-triphosphate. R152 is modified (omega-N-methylarginine; by PRMT6). The a 2'-deoxyribonucleoside 5'-triphosphate site is built by S180, R183, G189, and D190. Positions 183–192 (RGAESSGDMD) are DNA-binding. Mg(2+) contacts are provided by D190, D192, and D256.

The protein belongs to the DNA polymerase type-X family. In terms of assembly, monomer. Binds single-stranded DNA (ssDNA). Interacts with APEX1, LIG1, LIG3, FEN1, PCNA and XRCC1. Interacts with HUWE1/ARF-BP1, STUB1/CHIP and USP47. Interacts with FAM168A. Mg(2+) serves as cofactor. In terms of processing, methylation by PRMT6 stimulates the polymerase activity by enhancing DNA binding and processivity. Post-translationally, ubiquitinated at Lys-41, Lys-61 and Lys-81: monoubiquitinated by HUWE1/ARF-BP1. Monoubiquitinated protein is then the target of STUB1/CHIP, which catalyzes polyubiquitination from monoubiquitin, leading to degradation by the proteasome. USP47 mediates the deubiquitination of monoubiquitinated protein, preventing polyubiquitination by STUB1/CHIP and its subsequent degradation.

It localises to the nucleus. The protein resides in the cytoplasm. It catalyses the reaction DNA(n) + a 2'-deoxyribonucleoside 5'-triphosphate = DNA(n+1) + diphosphate. The catalysed reaction is a 5'-end 2'-deoxyribose-2'-deoxyribonucleotide-DNA = (2E,4S)-4-hydroxypenten-2-al-5-phosphate + a 5'-end 5'-phospho-2'-deoxyribonucleoside-DNA + H(+). The enzyme catalyses 2'-deoxyribonucleotide-(2'-deoxyribose 5'-phosphate)-2'-deoxyribonucleotide-DNA = a 3'-end 2'-deoxyribonucleotide-(2,3-dehydro-2,3-deoxyribose 5'-phosphate)-DNA + a 5'-end 5'-phospho-2'-deoxyribonucleoside-DNA + H(+). Repair polymerase that plays a key role in base-excision repair. During this process, the damaged base is excised by specific DNA glycosylases, the DNA backbone is nicked at the abasic site by an apurinic/apyrimidic (AP) endonuclease, and POLB removes 5'-deoxyribose-phosphate from the preincised AP site acting as a 5'-deoxyribose-phosphate lyase (5'-dRP lyase); through its DNA polymerase activity, it adds one nucleotide to the 3' end of the arising single-nucleotide gap. Conducts 'gap-filling' DNA synthesis in a stepwise distributive fashion rather than in a processive fashion as for other DNA polymerases. It is also able to cleave sugar-phosphate bonds 3' to an intact AP site, acting as an AP lyase. This Rattus norvegicus (Rat) protein is DNA polymerase beta (Polb).